A 266-amino-acid polypeptide reads, in one-letter code: Mitochondrial import inner membrane translocase subunit Tim29 (266 aa).

Residues Met1–Leu37 constitute a mitochondrion transit peptide. Residues Ser38 to Arg65 lie on the Mitochondrial matrix side of the membrane. The chain crosses the membrane as a helical span at residues Ala66 to Ala83. Residues Pro84 to Arg266 lie on the Mitochondrial intermembrane side of the membrane.

As to quaternary structure, component of the TIM22 complex, which core is composed of TIMM22, associated with TIMM10 (TIMM10A and/or TIMM10B), TIMM9, AGK and TIMM29. Interacts with TIMM10B; the interaction is direct. Interacts with TOMM40; linking the TIM22 complex to the TOM complex. Interacts with TIMM22 (when oxidized); the interaction is direct.

Its subcellular location is the mitochondrion inner membrane. Functionally, component of the TIM22 complex, a complex that mediates the import and insertion of multi-pass transmembrane proteins into the mitochondrial inner membrane. The TIM22 complex forms a twin-pore translocase that uses the membrane potential as the external driving force. Required for the stability of the TIM22 complex and functions in the assembly of the TIMM22 protein into the TIM22 complex. May facilitate cooperation between TIM22 and TOM complexes by interacting with TOMM40. The protein is Mitochondrial import inner membrane translocase subunit Tim29 (Timm29) of Mus musculus (Mouse).